We begin with the raw amino-acid sequence, 166 residues long: Interferon gamma (166 aa).

The first 23 residues, M1–G23, serve as a signal peptide directing secretion. Pyrrolidone carboxylic acid is present on Q24. N-linked (GlcNAc...) asparagine glycosylation is found at N39 and N106.

Belongs to the type II (or gamma) interferon family. Homodimer. Interacts with IFNGR1 (via extracellular domain); this interaction promotes IFNGR1 dimerization. As to expression, released primarily from activated T lymphocytes.

The protein resides in the secreted. Type II interferon produced by immune cells such as T-cells and NK cells that plays crucial roles in antimicrobial, antiviral, and antitumor responses by activating effector immune cells and enhancing antigen presentation. Primarily signals through the JAK-STAT pathway after interaction with its receptor IFNGR1 to affect gene regulation. Upon IFNG binding, IFNGR1 intracellular domain opens out to allow association of downstream signaling components JAK2, JAK1 and STAT1, leading to STAT1 activation, nuclear translocation and transcription of IFNG-regulated genes. Many of the induced genes are transcription factors such as IRF1 that are able to further drive regulation of a next wave of transcription. Plays a role in class I antigen presentation pathway by inducing a replacement of catalytic proteasome subunits with immunoproteasome subunits. In turn, increases the quantity, quality, and repertoire of peptides for class I MHC loading. Increases the efficiency of peptide generation also by inducing the expression of activator PA28 that associates with the proteasome and alters its proteolytic cleavage preference. Up-regulates as well MHC II complexes on the cell surface by promoting expression of several key molecules such as cathepsins B/CTSB, H/CTSH, and L/CTSL. Participates in the regulation of hematopoietic stem cells during development and under homeostatic conditions by affecting their development, quiescence, and differentiation. The chain is Interferon gamma (IFNG) from Bubalus bubalis (Domestic water buffalo).